Consider the following 882-residue polypeptide: Piwi-like protein 3 (882 aa).

The span at 1 to 15 (MPGRARTRARGRARR) shows a compositional bias: basic residues. Residues 1–91 (MPGRARTRAR…EAGLHTAPLQ (91 aa)) are disordered. The segment covering 32-46 (SATTQEPPQLQSTPR) has biased composition (polar residues). The region spanning 293 to 406 (TAYDFIKRTS…LIPQLCHMTG (114 aa)) is the PAZ domain. The region spanning 578-868 (KVICILPNDD…LAYLVGQSIH (291 aa)) is the Piwi domain.

The protein belongs to the argonaute family. Piwi subfamily. Expressed in testis.

The protein localises to the cytoplasm. Its function is as follows. May play a role during spermatogenesis by repressing transposable elements and preventing their mobilization, which is essential for the germline integrity. Acts via the piRNA metabolic process, which mediates the repression of transposable elements during meiosis by forming complexes composed of piRNAs and Piwi proteins and govern the methylation and subsequent repression of transposons. Directly binds piRNAs, a class of 24 to 30 nucleotide RNAs that are generated by a Dicer-independent mechanism and are primarily derived from transposons and other repeated sequence elements. Besides their function in transposable elements repression, piRNAs are probably involved in other processes during meiosis such as translation regulation. The protein is Piwi-like protein 3 (PIWIL3) of Homo sapiens (Human).